Here is a 771-residue protein sequence, read N- to C-terminus: Transcription factor Sp3 (771 aa).

Disordered stretches follow at residues methionine 1–glutamine 47 and lysine 60–serine 79. Residues alanine 34 to glutamine 47 show a composition bias toward low complexity. A Glycyl lysine isopeptide (Lys-Gly) (interchain with G-Cter in SUMO) cross-link involves residue lysine 109. Transactivation domain (Gln-rich) regions lie at residues glutamine 129–glutamine 228 and glutamate 341–glutamine 489. Residues isoleucine 451–glutamine 459 carry the 9aaTAD motif. The segment at isoleucine 524–glutamine 610 is repressor domain. Residue lysine 541 is modified to N6-acetyllysine; alternate. Residue lysine 541 forms a Glycyl lysine isopeptide (Lys-Gly) (interchain with G-Cter in SUMO); alternate linkage. 3 consecutive C2H2-type zinc fingers follow at residues histidine 611–histidine 635, phenylalanine 641–histidine 665, and phenylalanine 671–histidine 693.

It belongs to the Sp1 C2H2-type zinc-finger protein family. In terms of assembly, interacts with HDAC1 and HDAC2; the interaction deacetylates SP3 and regulates its transcriptional activity. Interacts with v-Jun. In terms of processing, acetylated by histone acetyltransferase p300, deacetylated by HDACs. Acetylation/deacetylation states regulate transcriptional activity. Acetylation appears to activate transcription. Alternate sumoylation and acetylation at Lys-541 also control transcriptional activity. Sumoylation represses transcriptional activity. Lys-541 is the major site. Sumoylation at this site promotes nuclear localization to the nuclear periphery, nuclear dots and PML nuclear bodies. Alternate sumoylation and acetylation at Lys-541 also control transcriptional activity.

The protein resides in the nucleus. It is found in the PML body. Transcriptional factor that can act as an activator or repressor depending on post-translational modifications. Binds to GT and GC boxes promoter elements. Competes with SP1 for the GC-box promoters. Weak activator of transcription. Required for activation of SPARC transcription. The polypeptide is Transcription factor Sp3 (SP3) (Gallus gallus (Chicken)).